Here is a 180-residue protein sequence, read N- to C-terminus: MSRVGKLPVKIPEKVKVSVDGNVVKVEGPKGKMHFPTNPLVSVQVDKGEVKVARQDESHVAKGLHGLTRTLVKNALEGVVKGYEKGLEINGVGFKAEVKGKDIHFTLGFSHPVVFKLPDGVTAEVDAKQTKLTIRSVDKHLLGLTAAKVRALRPPEPYKGKGIKYADETIRRKEGKTGAA.

It belongs to the universal ribosomal protein uL6 family. As to quaternary structure, part of the 50S ribosomal subunit.

This protein binds to the 23S rRNA, and is important in its secondary structure. It is located near the subunit interface in the base of the L7/L12 stalk, and near the tRNA binding site of the peptidyltransferase center. In Anaeromyxobacter sp. (strain K), this protein is Large ribosomal subunit protein uL6.